We begin with the raw amino-acid sequence, 342 residues long: Transmembrane protein 59-like (342 aa).

An N-terminal signal peptide occupies residues 1–24 (MAAVALMPPPLLLLLLLASPPAAS). An N-linked (GlcNAc...) asparagine glycan is attached at Asn97. A helical membrane pass occupies residues 268 to 290 (WILACCLFLSVLVMLWLSCSTLV). The short motif at 340-342 (TKL) is the Microbody targeting signal element.

This sequence belongs to the TMEM59 family. Expressed preferentially at high level in the brain.

The protein localises to the golgi apparatus membrane. Its function is as follows. Modulates the O-glycosylation and complex N-glycosylation steps occurring during the Golgi maturation of APP. Inhibits APP transport to the cell surface and further shedding. The chain is Transmembrane protein 59-like (TMEM59L) from Homo sapiens (Human).